The sequence spans 300 residues: Eukaryotic translation initiation factor 3 subunit F (300 aa).

Residues 33–169 (VKVHPVALFS…VQCYVSALLG (137 aa)) enclose the MPN domain.

The protein belongs to the eIF-3 subunit F family. As to quaternary structure, component of the eukaryotic translation initiation factor 3 (eIF-3) complex.

Its subcellular location is the cytoplasm. In terms of biological role, component of the eukaryotic translation initiation factor 3 (eIF-3) complex, which is involved in protein synthesis of a specialized repertoire of mRNAs and, together with other initiation factors, stimulates binding of mRNA and methionyl-tRNAi to the 40S ribosome. The eIF-3 complex specifically targets and initiates translation of a subset of mRNAs involved in cell proliferation. This chain is Eukaryotic translation initiation factor 3 subunit F, found in Malassezia globosa (strain ATCC MYA-4612 / CBS 7966) (Dandruff-associated fungus).